A 275-amino-acid polypeptide reads, in one-letter code: 2-C-methyl-D-erythritol 4-phosphate cytidylyltransferase (275 aa).

This sequence belongs to the IspD/TarI cytidylyltransferase family. IspD subfamily.

The catalysed reaction is 2-C-methyl-D-erythritol 4-phosphate + CTP + H(+) = 4-CDP-2-C-methyl-D-erythritol + diphosphate. It participates in isoprenoid biosynthesis; isopentenyl diphosphate biosynthesis via DXP pathway; isopentenyl diphosphate from 1-deoxy-D-xylulose 5-phosphate: step 2/6. In terms of biological role, catalyzes the formation of 4-diphosphocytidyl-2-C-methyl-D-erythritol from CTP and 2-C-methyl-D-erythritol 4-phosphate (MEP). The sequence is that of 2-C-methyl-D-erythritol 4-phosphate cytidylyltransferase from Corynebacterium jeikeium (strain K411).